Reading from the N-terminus, the 321-residue chain is D-alanine--D-alanine ligase (321 aa).

The ATP-grasp domain occupies 121-315 (RSCFLKNNIN…FTNLIEEIIK (195 aa)). Residue 148–199 (MKRPYVIKPLKQGSSIGVEVIFEEDDFHFIDYDFPYGEDIIIEQYIQGQELQ) participates in ATP binding. Mg(2+)-binding residues include Glu-268, Glu-282, and Asn-284.

The protein belongs to the D-alanine--D-alanine ligase family. Mg(2+) is required as a cofactor. It depends on Mn(2+) as a cofactor.

The protein localises to the cytoplasm. It carries out the reaction 2 D-alanine + ATP = D-alanyl-D-alanine + ADP + phosphate + H(+). It participates in cell wall biogenesis; peptidoglycan biosynthesis. Functionally, cell wall formation. This is D-alanine--D-alanine ligase from Rickettsia typhi (strain ATCC VR-144 / Wilmington).